The primary structure comprises 61 residues: Photosystem II reaction center protein K (61 aa).

Positions 1 to 24 (MLNILSFIGICLNSFLYSSSFFVA) are excised as a propeptide. The helical transmembrane segment at 40 to 60 (MPVIPLFFFLLAFVWQAAVSF) threads the bilayer.

This sequence belongs to the PsbK family. As to quaternary structure, PSII is composed of 1 copy each of membrane proteins PsbA, PsbB, PsbC, PsbD, PsbE, PsbF, PsbH, PsbI, PsbJ, PsbK, PsbL, PsbM, PsbT, PsbX, PsbY, PsbZ, Psb30/Ycf12, at least 3 peripheral proteins of the oxygen-evolving complex and a large number of cofactors. It forms dimeric complexes.

It localises to the plastid. The protein localises to the chloroplast thylakoid membrane. In terms of biological role, one of the components of the core complex of photosystem II (PSII). PSII is a light-driven water:plastoquinone oxidoreductase that uses light energy to abstract electrons from H(2)O, generating O(2) and a proton gradient subsequently used for ATP formation. It consists of a core antenna complex that captures photons, and an electron transfer chain that converts photonic excitation into a charge separation. The polypeptide is Photosystem II reaction center protein K (Cucumis sativus (Cucumber)).